The primary structure comprises 193 residues: Acyl carrier protein phosphodiesterase (193 aa).

The protein belongs to the AcpH family.

It catalyses the reaction holo-[ACP] + H2O = apo-[ACP] + (R)-4'-phosphopantetheine + H(+). Converts holo-ACP to apo-ACP by hydrolytic cleavage of the phosphopantetheine prosthetic group from ACP. In Klebsiella pneumoniae subsp. pneumoniae (strain ATCC 700721 / MGH 78578), this protein is Acyl carrier protein phosphodiesterase.